We begin with the raw amino-acid sequence, 96 residues long: uncharacterized protein (96 aa).

The next 2 helical transmembrane spans lie at 27–47 (LAFRISELFLIFSIPLFALLI) and 50–70 (LSGVNRVLMFFILVYYISIVF).

Its subcellular location is the cell membrane. This is an uncharacterized protein from Haemophilus influenzae (strain ATCC 51907 / DSM 11121 / KW20 / Rd).